The chain runs to 342 residues: Methylthioribose-1-phosphate isomerase (342 aa).

Residues 49–51 (RGA), R86, and Q187 each bind substrate. The active-site Proton donor is the D228. 238-239 (NK) provides a ligand contact to substrate.

Belongs to the eIF-2B alpha/beta/delta subunits family. MtnA subfamily.

The enzyme catalyses 5-(methylsulfanyl)-alpha-D-ribose 1-phosphate = 5-(methylsulfanyl)-D-ribulose 1-phosphate. It participates in amino-acid biosynthesis; L-methionine biosynthesis via salvage pathway; L-methionine from S-methyl-5-thio-alpha-D-ribose 1-phosphate: step 1/6. Functionally, catalyzes the interconversion of methylthioribose-1-phosphate (MTR-1-P) into methylthioribulose-1-phosphate (MTRu-1-P). This chain is Methylthioribose-1-phosphate isomerase, found in Klebsiella pneumoniae (strain 342).